The sequence spans 202 residues: Probable nicotinate-nucleotide adenylyltransferase (202 aa).

This sequence belongs to the NadD family.

It carries out the reaction nicotinate beta-D-ribonucleotide + ATP + H(+) = deamido-NAD(+) + diphosphate. It participates in cofactor biosynthesis; NAD(+) biosynthesis; deamido-NAD(+) from nicotinate D-ribonucleotide: step 1/1. Catalyzes the reversible adenylation of nicotinate mononucleotide (NaMN) to nicotinic acid adenine dinucleotide (NaAD). The protein is Probable nicotinate-nucleotide adenylyltransferase of Clostridium perfringens (strain ATCC 13124 / DSM 756 / JCM 1290 / NCIMB 6125 / NCTC 8237 / Type A).